We begin with the raw amino-acid sequence, 349 residues long: PDZ and LIM domain protein 2 (349 aa).

The region spanning 1-84 is the PDZ domain; it reads MALTVNVVGP…PLRLQLDRSQ (84 aa). Disordered regions lie at residues 72–95 and 108–147; these read SASPLRLQLDRSQTASPGQINGEG and LRTHHNSQSSQRSACFSPASLSPRPDSPFSTPPPTSPIAL. Polar residues-rich tracts occupy residues 81-90 and 108-121; these read DRSQTASPGQ and LRTHHNSQSSQRSA. Residues serine 124, serine 127, serine 129, serine 134, and serine 137 each carry the phosphoserine modification. Phosphothreonine occurs at positions 138 and 142. Phosphoserine occurs at positions 143 and 163. 2 disordered regions span residues 168 to 212 and 250 to 272; these read ATHH…SSLD and ERGGTPAFVPSSLSPKASLPTSR. A compositionally biased stretch (polar residues) spans 176 to 192; sequence GQPTSQQAGHSSPSDST. Phosphoserine occurs at positions 199, 204, 205, 209, 210, and 263. The span at 199-211 shows a compositional bias: low complexity; the sequence is SPGRPSSPRLSSL. The span at 260-270 shows a compositional bias: polar residues; it reads SSLSPKASLPT. In terms of domain architecture, LIM zinc-binding spans 281–341; sequence HTCEKCSVNI…EKHARQRYSM (61 aa).

In terms of assembly, interacts with alpha-actinins ACTN1 and ACTN4, FLNA and MYH9. Interacts (via LIM zinc-binding domain) with MKRN2. In terms of tissue distribution, highly expressed in cornea and lung. Expressed at intermediate level in sclera and combined tissues of the eye irido-corneal angle. Specifically expressed in the corneal epithelial cells but not in other corneal layers.

The protein resides in the cytoplasm. Its subcellular location is the cytoskeleton. Its function is as follows. Probable adapter protein located at the actin cytoskeleton that promotes cell attachment. Necessary for the migratory capacity of epithelial cells. Overexpression enhances cell adhesion to collagen and fibronectin and suppresses anchorage independent growth. May contribute to tumor cell migratory capacity. This is PDZ and LIM domain protein 2 (Pdlim2) from Rattus norvegicus (Rat).